We begin with the raw amino-acid sequence, 400 residues long: Phosphoglycerate kinase (400 aa).

Substrate is bound by residues 22 to 24, Arg-38, 61 to 64, Arg-120, and Arg-153; these read DFN and HLGR. ATP-binding positions include Lys-206, Gly-297, Glu-328, and 354–357; that span reads GGDT.

This sequence belongs to the phosphoglycerate kinase family. In terms of assembly, monomer.

It localises to the cytoplasm. It catalyses the reaction (2R)-3-phosphoglycerate + ATP = (2R)-3-phospho-glyceroyl phosphate + ADP. Its pathway is carbohydrate degradation; glycolysis; pyruvate from D-glyceraldehyde 3-phosphate: step 2/5. This Campylobacter curvus (strain 525.92) protein is Phosphoglycerate kinase.